We begin with the raw amino-acid sequence, 478 residues long: GTPase Obg (478 aa).

One can recognise an Obg domain in the interval 2-159; sequence TTFVDRVELH…RDIVLELKTV (158 aa). The tract at residues 61–87 is disordered; it reads HHSPHRKATNGQPGAGDNRSGKDGQDL. One can recognise an OBG-type G domain in the interval 160–330; the sequence is ADVALVGYPS…LSFALAGIIA (171 aa). Residues 166 to 173, 191 to 195, 212 to 215, 282 to 285, and 311 to 313 contribute to the GTP site; these read GYPSAGKS, FTTLV, DVPG, NKVD, and SAI. Ser-173 and Thr-193 together coordinate Mg(2+). The 83-residue stretch at 348 to 430 folds into the OCT domain; it reads PRAVDDAGFT…ENAVVFDWEP (83 aa). Residues 436 to 478 are disordered; that stretch reads AEMLGRRGEDHRLEEPRPAAQRRRERDAERDDAEKEYDEFDPF. A compositionally biased stretch (basic and acidic residues) spans 439–468; that stretch reads LGRRGEDHRLEEPRPAAQRRRERDAERDDA. Over residues 469 to 478 the composition is skewed to acidic residues; the sequence is EKEYDEFDPF.

Belongs to the TRAFAC class OBG-HflX-like GTPase superfamily. OBG GTPase family. Monomer. It depends on Mg(2+) as a cofactor.

It localises to the cytoplasm. An essential GTPase which binds GTP, GDP and possibly (p)ppGpp with moderate affinity, with high nucleotide exchange rates and a fairly low GTP hydrolysis rate. Plays a role in control of the cell cycle, stress response, ribosome biogenesis and in those bacteria that undergo differentiation, in morphogenesis control. This Streptomyces griseus subsp. griseus (strain JCM 4626 / CBS 651.72 / NBRC 13350 / KCC S-0626 / ISP 5235) protein is GTPase Obg.